The chain runs to 182 residues: MGLLSILRKLKSAPDQEVRILLLGLDNAGKTTLLKQLASEDISHITPTQGFNIKSVQSQGFKLNVWDIGGQRKIRPYWRSYFENTDILIYVIDSADRKRFEETGQELTELLEEEKLSCVPVLVFANKQDLLTAAPAAEIAEGLNLHTIRDRVWQIQSCSALTGEGVQDGMNWVCKNVNAKKK.

G2 carries N-myristoyl glycine lipidation. S5 is subject to Phosphoserine. GTP-binding positions include 24-31 (GLDNAGKT), T48, 67-71 (DIGGQ), G70, 126-129 (NKQD), and 159-161 (SAL). T31 and T48 together coordinate Mg(2+).

The protein belongs to the small GTPase superfamily. Arf family. As to quaternary structure, found in a complex with ARL3, RP2 and UNC119 (or UNC119B); RP2 induces hydrolysis of GTP ARL3 in the complex, leading to the release of UNC119 (or UNC119B). Interacts with RP2; interaction is direct and stimulated with the activated GTP-bound form of ARL3. Interacts with SYS1. Interacts with ARL2BP; the GTP-bound form interacts with ARL2BP. Microtubule-associated protein. Does not interact with TBCC. Interacts with RP2. Interacts with PDE6D; the interaction occurs specifically with the GTP-bound form of ARL3. Interacts with GGA1; the interaction recruits PKD1:PKD2 complex to trans-Golgi network and is required for ciliary targeting of PKD1:PKD2 complex. Interacts with DNAAF9.

The protein resides in the golgi apparatus membrane. It localises to the cytoplasm. It is found in the cytoskeleton. Its subcellular location is the spindle. The protein localises to the nucleus. The protein resides in the microtubule organizing center. It localises to the centrosome. It is found in the cell projection. Its subcellular location is the cilium. Its function is as follows. Small GTP-binding protein which cycles between an inactive GDP-bound and an active GTP-bound form, and the rate of cycling is regulated by guanine nucleotide exchange factors (GEF) and GTPase-activating proteins (GAP). Required for normal cytokinesis and cilia signaling. Requires assistance from GTPase-activating proteins (GAPs) like RP2 and PDE6D, in order to cycle between inactive GDP-bound and active GTP-bound forms. Required for targeting proteins to the cilium, including myristoylated NPHP3 and prenylated INPP5E. Targets NPHP3 to the ciliary membrane by releasing myristoylated NPHP3 from UNC119B cargo adapter into the cilium. Required for PKD1:PKD2 complex targeting from the trans-Golgi network to the cilium. The polypeptide is ADP-ribosylation factor-like protein 3 (Arl3) (Rattus norvegicus (Rat)).